A 347-amino-acid chain; its full sequence is UDP-glucose 4-epimerase (347 aa).

Residues 11 to 13 (GYI), 32 to 36 (DNFHN), 65 to 66 (DI), Phe-87, and Lys-91 contribute to the NAD(+) site. Substrate is bound at residue 131-133 (SAT). Residue Tyr-156 is the Proton acceptor of the active site. The NAD(+) site is built by Lys-160 and Tyr-184. Residues 184 to 186 (YFN), 205 to 207 (NNL), 223 to 225 (NVF), Arg-238, and 299 to 302 (REGD) contribute to the substrate site.

Belongs to the NAD(P)-dependent epimerase/dehydratase family. As to quaternary structure, homodimer. Requires NAD(+) as cofactor.

The catalysed reaction is UDP-alpha-D-glucose = UDP-alpha-D-galactose. It catalyses the reaction UDP-N-acetyl-alpha-D-glucosamine = UDP-N-acetyl-alpha-D-galactosamine. It participates in carbohydrate metabolism; galactose metabolism. Its function is as follows. Catalyzes two distinct but analogous reactions: the reversible epimerization of UDP-glucose to UDP-galactose and the reversible epimerization of UDP-N-acetylglucosamine to UDP-N-acetylgalactosamine. The reaction with UDP-Gal plays a critical role in the Leloir pathway of galactose catabolism in which galactose is converted to the glycolytic intermediate glucose 6-phosphate. It contributes to the catabolism of dietary galactose and enables the endogenous biosynthesis of both UDP-Gal and UDP-GalNAc when exogenous sources are limited. Both UDP-sugar interconversions are important in the synthesis of glycoproteins and glycolipids. The chain is UDP-glucose 4-epimerase (Gale) from Mus musculus (Mouse).